Reading from the N-terminus, the 264-residue chain is MKNYSSLLIGGKKFSSRLMVGTGKYKSTQDMIESLSNSETEIITVAVRRIKNDETGENLLEKINWKKYWMLPNTAGCVNSDEAVRIAILGRELAKLSGQEENNFVKLEVIPDKKYLLPDPMETLKAAEILIKKGFSVLPYINADPILAKRLEEIGCATVMPLGSPIGSGQGLLNLSNIGIIIESAKVPVIIDAGIGVPSEASQAMELGADGVLINSAIAQAENPPLMAQAINYGVKAGRQAFLAGRIKKQDFATASSPEKNISI.

Lys106 serves as the catalytic Schiff-base intermediate with DXP. 1-deoxy-D-xylulose 5-phosphate is bound by residues Gly167, 193–194, and 215–216; these read AG and NS.

It belongs to the ThiG family. In terms of assembly, homotetramer. Forms heterodimers with either ThiH or ThiS.

Its subcellular location is the cytoplasm. The enzyme catalyses [ThiS sulfur-carrier protein]-C-terminal-Gly-aminoethanethioate + 2-iminoacetate + 1-deoxy-D-xylulose 5-phosphate = [ThiS sulfur-carrier protein]-C-terminal Gly-Gly + 2-[(2R,5Z)-2-carboxy-4-methylthiazol-5(2H)-ylidene]ethyl phosphate + 2 H2O + H(+). Its pathway is cofactor biosynthesis; thiamine diphosphate biosynthesis. In terms of biological role, catalyzes the rearrangement of 1-deoxy-D-xylulose 5-phosphate (DXP) to produce the thiazole phosphate moiety of thiamine. Sulfur is provided by the thiocarboxylate moiety of the carrier protein ThiS. In vitro, sulfur can be provided by H(2)S. This chain is Thiazole synthase, found in Prochlorococcus marinus (strain MIT 9215).